The following is a 296-amino-acid chain: Pantothenate synthetase (296 aa).

31–38 (MGYLHEGH) provides a ligand contact to ATP. Residue His38 is the Proton donor of the active site. Residue Gln62 coordinates (R)-pantoate. Gln62 is a binding site for beta-alanine. Residue 148-151 (GEKD) coordinates ATP. Residue Gln154 participates in (R)-pantoate binding. ATP-binding positions include Val177 and 185-188 (LSSR).

Belongs to the pantothenate synthetase family. As to quaternary structure, homodimer.

The protein localises to the cytoplasm. It catalyses the reaction (R)-pantoate + beta-alanine + ATP = (R)-pantothenate + AMP + diphosphate + H(+). The protein operates within cofactor biosynthesis; (R)-pantothenate biosynthesis; (R)-pantothenate from (R)-pantoate and beta-alanine: step 1/1. Its function is as follows. Catalyzes the condensation of pantoate with beta-alanine in an ATP-dependent reaction via a pantoyl-adenylate intermediate. This Deinococcus geothermalis (strain DSM 11300 / CIP 105573 / AG-3a) protein is Pantothenate synthetase.